A 130-amino-acid polypeptide reads, in one-letter code: Small ribosomal subunit protein uS11 (130 aa).

The protein belongs to the universal ribosomal protein uS11 family. In terms of assembly, part of the 30S ribosomal subunit. Interacts with proteins S7 and S18. Binds to IF-3.

In terms of biological role, located on the platform of the 30S subunit, it bridges several disparate RNA helices of the 16S rRNA. Forms part of the Shine-Dalgarno cleft in the 70S ribosome. In Lactobacillus helveticus (strain DPC 4571), this protein is Small ribosomal subunit protein uS11.